The following is a 233-amino-acid chain: Cytidylate kinase (233 aa).

15–23 (GPSGAGKSS) provides a ligand contact to ATP.

This sequence belongs to the cytidylate kinase family. Type 1 subfamily.

The protein resides in the cytoplasm. The enzyme catalyses CMP + ATP = CDP + ADP. The catalysed reaction is dCMP + ATP = dCDP + ADP. This is Cytidylate kinase from Citrifermentans bemidjiense (strain ATCC BAA-1014 / DSM 16622 / JCM 12645 / Bem) (Geobacter bemidjiensis).